Consider the following 703-residue polypeptide: Probable boron transporter 2 (703 aa).

The Cytoplasmic portion of the chain corresponds to 1–35; it reads MEETFVPFEGIKNDLKGRLMCYKQDWTGGIKAGFR. A helical transmembrane segment spans residues 36–56; it reads ILAPTTYIFFASAIPVISFGE. Over 57–75 the chain is Extracellular; that stretch reads QLERSTDGVLTAVQTLAST. A helical membrane pass occupies residues 76–96; it reads AICGIIHSIIGGQPLLILGVA. Topologically, residues 97-120 are cytoplasmic; sequence EPTVIMYTFMFNFAKGRPELGRNL. A helical membrane pass occupies residues 121 to 141; the sequence is FLAWSGWVCVWTSLILFVLAI. At 142–155 the chain is on the extracellular side; sequence CGACSFINRFTRVA. A helical membrane pass occupies residues 156–176; sequence GELFGLLIAMLFMQQAIKGLV. The Cytoplasmic segment spans residues 177–195; that stretch reads DEFRAPAREDLKLVEFLPS. Residues 196–216 traverse the membrane as a helical segment; the sequence is WRFANGMFALVLSFGLLITAL. Residues 217–233 are Extracellular-facing; it reads RSRKARSWRYGTGWLRS. Residues 234–254 traverse the membrane as a helical segment; sequence LVADYGVPLMVLVWTGVSYIP. Residues 255-289 lie on the Cytoplasmic side of the membrane; it reads TGDVPKGIPRRLFSPNPWSPGAYENWTVVKEMLQV. The chain crosses the membrane as a helical span at residues 290–310; that stretch reads PIVYIIGAFIPATMIAVLYYF. The Extracellular segment spans residues 311 to 337; it reads DHSVASQLAQQKEFNLRKPSSYHYDLL. Residues 338–358 traverse the membrane as a helical segment; that stretch reads LLGFLTLMCGLLGIPPSNGVI. At 359-480 the chain is on the cytoplasmic side; it reads PQSPMHTKSL…AVMVGGCVAA (122 aa). Residues 481-501 traverse the membrane as a helical segment; sequence MPLLKMIPTSVLWGYFAFMAI. The Extracellular portion of the chain corresponds to 502–557; sequence ESLPGNQFWERILLLFTAPSRRFKVLEDNHATFVETVPFKTIAMFTIFQTTYLLTC. Residues 558 to 578 traverse the membrane as a helical segment; the sequence is FGLTWIPIAGVMFPLLIMFLI. The Cytoplasmic portion of the chain corresponds to 579–703; it reads PVRQYILPRF…SPLNPSSSSK (125 aa). The disordered stretch occupies residues 678–703; sequence EMSPRLSGKGQNSPKPSPLNPSSSSK.

The protein belongs to the anion exchanger (TC 2.A.31.3) family.

It is found in the membrane. Its function is as follows. Probable boron transporter. Boron is essential for maintaining the integrity of plants cell walls. In Arabidopsis thaliana (Mouse-ear cress), this protein is Probable boron transporter 2 (BOR2).